The following is a 353-amino-acid chain: Probable dual-specificity RNA methyltransferase RlmN (353 aa).

Glu-90 functions as the Proton acceptor in the catalytic mechanism. The Radical SAM core domain maps to 96 to 326; that stretch reads YKHGNSICIS…VTTRREMGSD (231 aa). Residues Cys-103 and Cys-331 are joined by a disulfide bond. [4Fe-4S] cluster-binding residues include Cys-110, Cys-114, and Cys-117. S-adenosyl-L-methionine-binding positions include 157 to 158, Ser-189, 212 to 214, and Asn-288; these read GE and SLH. Catalysis depends on Cys-331, which acts as the S-methylcysteine intermediate.

This sequence belongs to the radical SAM superfamily. RlmN family. The cofactor is [4Fe-4S] cluster.

The protein localises to the cytoplasm. It catalyses the reaction adenosine(2503) in 23S rRNA + 2 reduced [2Fe-2S]-[ferredoxin] + 2 S-adenosyl-L-methionine = 2-methyladenosine(2503) in 23S rRNA + 5'-deoxyadenosine + L-methionine + 2 oxidized [2Fe-2S]-[ferredoxin] + S-adenosyl-L-homocysteine. It carries out the reaction adenosine(37) in tRNA + 2 reduced [2Fe-2S]-[ferredoxin] + 2 S-adenosyl-L-methionine = 2-methyladenosine(37) in tRNA + 5'-deoxyadenosine + L-methionine + 2 oxidized [2Fe-2S]-[ferredoxin] + S-adenosyl-L-homocysteine. Functionally, specifically methylates position 2 of adenine 2503 in 23S rRNA and position 2 of adenine 37 in tRNAs. The protein is Probable dual-specificity RNA methyltransferase RlmN of Clostridium beijerinckii (strain ATCC 51743 / NCIMB 8052) (Clostridium acetobutylicum).